Reading from the N-terminus, the 159-residue chain is Ribosomal RNA large subunit methyltransferase H (159 aa).

S-adenosyl-L-methionine-binding positions include leucine 76, glycine 107, and 126 to 131 (LSSLTL).

This sequence belongs to the RNA methyltransferase RlmH family. Homodimer.

It localises to the cytoplasm. It catalyses the reaction pseudouridine(1915) in 23S rRNA + S-adenosyl-L-methionine = N(3)-methylpseudouridine(1915) in 23S rRNA + S-adenosyl-L-homocysteine + H(+). In terms of biological role, specifically methylates the pseudouridine at position 1915 (m3Psi1915) in 23S rRNA. In Cupriavidus necator (strain ATCC 17699 / DSM 428 / KCTC 22496 / NCIMB 10442 / H16 / Stanier 337) (Ralstonia eutropha), this protein is Ribosomal RNA large subunit methyltransferase H.